We begin with the raw amino-acid sequence, 180 residues long: NADH-quinone oxidoreductase subunit I (180 aa).

2 consecutive 4Fe-4S ferredoxin-type domains span residues 48–80 (IVLTRDPDGQERCVACNLCAVACPVGCISLQKA) and 90–119 (EFFRINFSRCIFCGLCEEACPTTAIQLTPD). Residues Cys-60, Cys-63, Cys-66, Cys-70, Cys-99, Cys-102, Cys-105, and Cys-109 each coordinate [4Fe-4S] cluster.

Belongs to the complex I 23 kDa subunit family. As to quaternary structure, NDH-1 is composed of 13 different subunits. Subunits NuoA, H, J, K, L, M, N constitute the membrane sector of the complex. The cofactor is [4Fe-4S] cluster.

Its subcellular location is the cell inner membrane. The catalysed reaction is a quinone + NADH + 5 H(+)(in) = a quinol + NAD(+) + 4 H(+)(out). In terms of biological role, NDH-1 shuttles electrons from NADH, via FMN and iron-sulfur (Fe-S) centers, to quinones in the respiratory chain. The immediate electron acceptor for the enzyme in this species is believed to be ubiquinone. Couples the redox reaction to proton translocation (for every two electrons transferred, four hydrogen ions are translocated across the cytoplasmic membrane), and thus conserves the redox energy in a proton gradient. The sequence is that of NADH-quinone oxidoreductase subunit I from Erwinia tasmaniensis (strain DSM 17950 / CFBP 7177 / CIP 109463 / NCPPB 4357 / Et1/99).